The following is a 734-amino-acid chain: MSLKNEDQNDLSPKDSVKGNDQYRAPSGIHLEPEEESRNDFWQFEPSNLFRHPRIHLEPQEKSDNNFKKFVIKKLEKSCQCSSTKAKNTIFGFLPVLQWLPKYDLKKNILGDVMSGLIVGILLVPQSIAYSLLAGQEPIYGLYTSFFASLIYFILGTSRHISVGIFGILCLMIGEVVDRELYIAGYDTVHAASNESSLVNQISDKTCDRSCYAIIVGSTVTFVAGVYQVAMGFFQVGFVSVYLSDALLGGFVTGASFTILTSQVKYLLGLSLPRSAGVGSLITTWLHVFRNIRKTNICDLITSLLCLLVLLPTKELNERFKSKLKAPIPVELFVIVAATLASHFGKLNEKYGTSIAGHIPTGFMPPKAPDWNLIPRVAVDAIAIAIIGFAITVSLSEMFAKKHGYTVKANQEMYAIGFCNIIPSFFHCFTTSAALAKTLVKESTGCQTQVSGVMTALVLLLVLLVIAPLFFSLQKSVLGVITIVNLRGALCKFKDLPQMWRISRMDTVIWFVTMLSSALISTEIGLLTGVCFSMFCVILRTQKPKASLLGLVEDSEVFESMSAYKNLQAKSGIKIFRFVAPLYYVNKEYFKSVLYKKTLNPVLVKAAQRKAAKRKIKRETVTPSGIQDEVSVQLSHDPLEFHTIVIDCSAIQFLDTAGIHTLKEVRRDYEAVGIQVLLAQCNPSVRDSLARGEYCKKDEENLLFYSIYEAMTFAEDSQNQKERHIPNGPNFSSD.

The span at 1–18 (MSLKNEDQNDLSPKDSVK) shows a compositional bias: basic and acidic residues. The segment at 1–38 (MSLKNEDQNDLSPKDSVKGNDQYRAPSGIHLEPEEESR) is disordered. Ser-12 and Ser-16 each carry phosphoserine. Helical transmembrane passes span 113–133 (VMSGLIVGILLVPQSIAYSLL) and 138–158 (PIYGLYTSFFASLIYFILGTS). An N-linked (GlcNAc...) asparagine glycan is attached at Asn-194. 6 consecutive transmembrane segments (helical) span residues 214–234 (IIVGSTVTFVAGVYQVAMGFF), 237–257 (GFVSVYLSDALLGGFVTGASF), 379–399 (VDAIAIAIIGFAITVSLSEMF), 415–435 (AIGFCNIIPSFFHCFTTSAAL), 453–473 (VMTALVLLLVLLVIAPLFFSL), and 519–539 (LISTEIGLLTGVCFSMFCVIL). The 152-residue stretch at 563 to 714 (AYKNLQAKSG…YSIYEAMTFA (152 aa)) folds into the STAS domain.

This sequence belongs to the SLC26A/SulP transporter (TC 2.A.53) family. In terms of processing, N-glycosylated.

The protein resides in the cell membrane. It is found in the apical cell membrane. It catalyses the reaction oxalate(in) + sulfate(out) = oxalate(out) + sulfate(in). The enzyme catalyses sulfate(out) + 2 chloride(in) = sulfate(in) + 2 chloride(out). It carries out the reaction oxalate(out) + 2 chloride(in) = oxalate(in) + 2 chloride(out). The catalysed reaction is bromide(in) + chloride(out) = bromide(out) + chloride(in). It catalyses the reaction nitrate(in) + chloride(out) = nitrate(out) + chloride(in). The enzyme catalyses iodide(in) + chloride(out) = iodide(out) + chloride(in). Its function is as follows. Sulfate transporter which mediates sulfate uptake into chondrocytes in order to maintain adequate sulfation of proteoglycans which is needed for cartilage development. Mediates electroneutral anion exchange of sulfate ions for oxalate ions, sulfate and oxalate ions for chloride and/or hydroxyl ions and chloride ions for bromide, iodide and nitrate ions. The coupling of sulfate transport to both hydroxyl and chloride ions likely serves to ensure transport at both acidic pH when most sulfate uptake is mediated by sulfate-hydroxide exchange and alkaline pH when most sulfate uptake is mediated by sulfate-chloride exchange. Essential for chondrocyte proliferation, differentiation and cell size expansion. The polypeptide is Sulfate transporter (SLC26A2) (Bos taurus (Bovine)).